The following is a 426-amino-acid chain: Tubby protein homolog 1 (426 aa).

The required for localization to cilia in AWB sensory neurons stretch occupies residues glutamine 16–arginine 28. A disordered region spans residues methionine 19 to serine 39.

Belongs to the TUB family. In terms of assembly, interacts with rgb-3. In terms of tissue distribution, expressed in ciliated sensory neurons.

The protein localises to the cytoplasm. Its subcellular location is the cell projection. The protein resides in the axon. It localises to the dendrite. It is found in the cilium. Functionally, has a role in fat regulation independent of daf-16. Implicated in ciliar sensory function which is required for normal sensory behavior such as chemotaxis. Required for extension and growth of sensory neuronal cilia during postembryonic development, potentially via mediating signaling protein transport and localization of PI(4,5)P2 to the ciliary base. Functions in life span control via the insulin/IGF-1 pathway. Thought to be involved in neuronal trafficking. The polypeptide is Tubby protein homolog 1 (Caenorhabditis elegans).